We begin with the raw amino-acid sequence, 151 residues long: Nucleoside diphosphate kinase (151 aa).

ATP is bound by residues K9, F57, R86, T92, R103, and N113. H116 serves as the catalytic Pros-phosphohistidine intermediate.

It belongs to the NDK family. In terms of assembly, homotetramer. Mg(2+) is required as a cofactor.

The protein localises to the cytoplasm. It catalyses the reaction a 2'-deoxyribonucleoside 5'-diphosphate + ATP = a 2'-deoxyribonucleoside 5'-triphosphate + ADP. It carries out the reaction a ribonucleoside 5'-diphosphate + ATP = a ribonucleoside 5'-triphosphate + ADP. Major role in the synthesis of nucleoside triphosphates other than ATP. The ATP gamma phosphate is transferred to the NDP beta phosphate via a ping-pong mechanism, using a phosphorylated active-site intermediate. This chain is Nucleoside diphosphate kinase, found in Chloroflexus aurantiacus (strain ATCC 29364 / DSM 637 / Y-400-fl).